The chain runs to 423 residues: Polyglutamylase complex subunit TTLL1 (423 aa).

The region spanning 1 to 367 (MAGKVKWVTD…NGEIPDCKWN (367 aa)) is the TTL domain. ATP contacts are provided by residues Lys-138, 144–145 (QG), 181–184 (SLYI), and 194–196 (KFD). Gln-144 lines the a protein pocket. Arg-220 lines the L-glutamate pocket. Residue 241–242 (TN) coordinates ATP. Lys-259 is an L-glutamate binding site. Asp-313, Glu-326, and Asn-328 together coordinate Mg(2+). An L-glutamate-binding site is contributed by Lys-344. The tract at residues 391–423 (GAERELRSRPGQSLGPKGSRLRDAGRTVLTTWK) is disordered.

The protein belongs to the tubulin polyglutamylase family. In terms of assembly, part of the neuronal tubulin polyglutamylase complex which contains TPGS1, TPGS2, TTLL1, LRRC49 and NICN1. Interacts with PCM1, CSTPP1 and LRRC49. It depends on Mg(2+) as a cofactor.

The protein localises to the cytoplasm. It localises to the cytoskeleton. It is found in the cilium basal body. The protein resides in the cilium axoneme. Its subcellular location is the cell projection. The protein localises to the cilium. It localises to the flagellum. It carries out the reaction (L-glutamyl)(n)-gamma-L-glutamyl-L-glutamyl-[protein] + L-glutamate + ATP = (L-glutamyl)(n+1)-gamma-L-glutamyl-L-glutamyl-[protein] + ADP + phosphate + H(+). In terms of biological role, catalytic subunit of a polyglutamylase complex which modifies tubulin, generating side chains of glutamate on the gamma-carboxyl group of specific glutamate residues within the C-terminal tail of tubulin. Probably involved in the side-chain elongation step of the polyglutamylation reaction rather than the initiation step. Modifies both alpha- and beta-tubulins with a preference for the alpha-tail. Unlike most polyglutamylases of the tubulin--tyrosine ligase family, only displays a catalytic activity when in complex with other proteins as it is most likely lacking domains important for autonomous activity. Part of the neuronal tubulin polyglutamylase complex. Mediates cilia and flagella polyglutamylation which is essential for their biogenesis and motility. Involved in respiratory motile cilia function through the regulation of beating asymmetry. Essential for sperm flagella biogenesis, motility and male fertility. Involved in KLF4 glutamylation which impedes its ubiquitination, thereby leading to somatic cell reprogramming, pluripotency maintenance and embryogenesis. In Bos taurus (Bovine), this protein is Polyglutamylase complex subunit TTLL1 (TTLL1).